Here is a 556-residue protein sequence, read N- to C-terminus: Phenylalanine--tRNA ligase beta subunit (556 aa).

Positions 278–354 constitute a B5 domain; it reads LTPKEFEVSF…IAYGYNNIDP (77 aa). Mg(2+) contacts are provided by Asp-332, Asp-338, Glu-341, and Asp-342.

This sequence belongs to the phenylalanyl-tRNA synthetase beta subunit family. Type 2 subfamily. As to quaternary structure, tetramer of two alpha and two beta subunits. Requires Mg(2+) as cofactor.

It localises to the cytoplasm. It carries out the reaction tRNA(Phe) + L-phenylalanine + ATP = L-phenylalanyl-tRNA(Phe) + AMP + diphosphate + H(+). The chain is Phenylalanine--tRNA ligase beta subunit from Pyrococcus furiosus (strain ATCC 43587 / DSM 3638 / JCM 8422 / Vc1).